Reading from the N-terminus, the 92-residue chain is Acylphosphatase (92 aa).

An intrachain disulfide couples cysteine 5 to cysteine 49. One can recognise an Acylphosphatase-like domain in the interval 5 to 92 (CIIAWIYGRV…SGELTDFRIR (88 aa)). Catalysis depends on residues arginine 20 and asparagine 38.

The protein belongs to the acylphosphatase family.

The enzyme catalyses an acyl phosphate + H2O = a carboxylate + phosphate + H(+). The sequence is that of Acylphosphatase from Escherichia coli O1:K1 / APEC.